The chain runs to 61 residues: Metallothionein-1 (61 aa).

N-acetylmethionine is present on Met1. Residues 1-29 form a beta region; that stretch reads MDPNCSCATGVSCTCADSCKCKECKCTSC. The a divalent metal cation site is built by Cys5, Cys7, Cys13, Cys15, Cys19, Cys21, Cys24, Cys26, Cys29, Cys33, Cys34, Cys36, Cys37, Cys41, Cys44, Cys48, Cys50, Cys57, Cys59, and Cys60. The segment at 30–61 is alpha; that stretch reads KKSCCSCCPVGCAKCAQGCVCKGASEKCNCCA.

Belongs to the metallothionein superfamily. Type 1 family.

Its function is as follows. Metallothioneins have a high content of cysteine residues that bind various heavy metals; these proteins are transcriptionally regulated by both heavy metals and glucocorticoids. This is Metallothionein-1 (MT1) from Chlorocebus aethiops (Green monkey).